Here is a 117-residue protein sequence, read N- to C-terminus: MENVNFTPKEILQKQFRQKMRGYDPDDVDSFLDNVIKDYDAFVKENQRLQDENERLLAKVDELTRQVQVGASQPRAAATSPASSNVTNMDILKRLSNLERHVFGSQLDNDPNESHRL.

Residues 32–70 are a coiled coil; the sequence is LDNVIKDYDAFVKENQRLQDENERLLAKVDELTRQVQVG.

The protein belongs to the GpsB family. Forms polymers through the coiled coil domains. Interacts with PBP1, MreC and EzrA.

The protein localises to the cytoplasm. Divisome component that associates with the complex late in its assembly, after the Z-ring is formed, and is dependent on DivIC and PBP2B for its recruitment to the divisome. Together with EzrA, is a key component of the system that regulates PBP1 localization during cell cycle progression. Its main role could be the removal of PBP1 from the cell pole after pole maturation is completed. Also contributes to the recruitment of PBP1 to the division complex. Not essential for septum formation. This chain is Cell cycle protein GpsB, found in Levilactobacillus brevis (strain ATCC 367 / BCRC 12310 / CIP 105137 / JCM 1170 / LMG 11437 / NCIMB 947 / NCTC 947) (Lactobacillus brevis).